We begin with the raw amino-acid sequence, 256 residues long: Thiazole synthase (256 aa).

Lys-95 (schiff-base intermediate with DXP) is an active-site residue. 1-deoxy-D-xylulose 5-phosphate is bound by residues Gly-156, 182 to 183 (AG), and 204 to 205 (NT).

Belongs to the ThiG family. As to quaternary structure, homotetramer. Forms heterodimers with either ThiH or ThiS.

The protein localises to the cytoplasm. It catalyses the reaction [ThiS sulfur-carrier protein]-C-terminal-Gly-aminoethanethioate + 2-iminoacetate + 1-deoxy-D-xylulose 5-phosphate = [ThiS sulfur-carrier protein]-C-terminal Gly-Gly + 2-[(2R,5Z)-2-carboxy-4-methylthiazol-5(2H)-ylidene]ethyl phosphate + 2 H2O + H(+). It participates in cofactor biosynthesis; thiamine diphosphate biosynthesis. Catalyzes the rearrangement of 1-deoxy-D-xylulose 5-phosphate (DXP) to produce the thiazole phosphate moiety of thiamine. Sulfur is provided by the thiocarboxylate moiety of the carrier protein ThiS. In vitro, sulfur can be provided by H(2)S. The protein is Thiazole synthase of Escherichia coli O7:K1 (strain IAI39 / ExPEC).